A 224-amino-acid chain; its full sequence is CMRF35-like molecule 6 (224 aa).

A signal peptide spans 1-20; it reads MTARAWASWRSSALLLLLVP. Residues 21–183 are Extracellular-facing; it reads GYFPLSHPMT…HPGSLFSNVR (163 aa). The Ig-like V-type domain maps to 22 to 130; sequence YFPLSHPMTV…HDPIVEVEVS (109 aa). 2 disulfide bridges follow: Cys43/Cys110 and Cys57/Cys65. Residues Asn90 and Asn99 are each glycosylated (N-linked (GlcNAc...) asparagine). Residues 136–151 are compositionally biased toward polar residues; sequence TTTASSPQSSMGTSGP. The disordered stretch occupies residues 136–174; it reads TTTASSPQSSMGTSGPPTKLPVHTWPSVTRKDSPEPSPH. The chain crosses the membrane as a helical span at residues 184–204; that stretch reads FLLLVLLELPLLLSMLGAVLW. Over 205 to 224 the chain is Cytoplasmic; the sequence is VNRPQRSSRSRQNWPKGENQ.

This sequence belongs to the CD300 family. As to expression, present on the surface of monocytes, neutrophils, a proportion of peripheral blood T- and B-lymphocytes and lymphocytic cell lines.

Its subcellular location is the cell membrane. The protein is CMRF35-like molecule 6 (CD300C) of Homo sapiens (Human).